Reading from the N-terminus, the 416-residue chain is Enolase (416 aa).

Residue Gln160 coordinates (2R)-2-phosphoglycerate. Residue Glu204 is the Proton donor of the active site. Asp239, Glu280, and Asp306 together coordinate Mg(2+). 4 residues coordinate (2R)-2-phosphoglycerate: Lys331, Arg360, Ser361, and Lys382. Lys331 functions as the Proton acceptor in the catalytic mechanism.

Belongs to the enolase family. Requires Mg(2+) as cofactor.

The protein resides in the cytoplasm. Its subcellular location is the secreted. It is found in the cell surface. It carries out the reaction (2R)-2-phosphoglycerate = phosphoenolpyruvate + H2O. It participates in carbohydrate degradation; glycolysis; pyruvate from D-glyceraldehyde 3-phosphate: step 4/5. Functionally, catalyzes the reversible conversion of 2-phosphoglycerate (2-PG) into phosphoenolpyruvate (PEP). It is essential for the degradation of carbohydrates via glycolysis. This Sulfolobus acidocaldarius (strain ATCC 33909 / DSM 639 / JCM 8929 / NBRC 15157 / NCIMB 11770) protein is Enolase.